Consider the following 478-residue polypeptide: Transposase for insertion sequence element IS231B (478 aa).

This sequence belongs to the transposase 11 family.

In terms of biological role, involved in the transposition of the insertion sequence. This Bacillus thuringiensis subsp. berliner protein is Transposase for insertion sequence element IS231B.